The following is a 505-amino-acid chain: GMP synthase [glutamine-hydrolyzing] (505 aa).

The region spanning 2-190 (SVVILDFGSQ…FLEICGVARD (189 aa)) is the Glutamine amidotransferase type-1 domain. C79 serves as the catalytic Nucleophile. Residues H165 and E167 contribute to the active site. Residues 191–380 (WNAEHIVDEL…LGLPDAIRMR (190 aa)) enclose the GMPS ATP-PPase domain. An ATP-binding site is contributed by 218-224 (SGGVDSS).

In terms of assembly, homodimer.

It carries out the reaction XMP + L-glutamine + ATP + H2O = GMP + L-glutamate + AMP + diphosphate + 2 H(+). Its pathway is purine metabolism; GMP biosynthesis; GMP from XMP (L-Gln route): step 1/1. Functionally, catalyzes the synthesis of GMP from XMP. The chain is GMP synthase [glutamine-hydrolyzing] from Deinococcus geothermalis (strain DSM 11300 / CIP 105573 / AG-3a).